A 231-amino-acid chain; its full sequence is DNA damage response protein C (231 aa).

In terms of assembly, homodimer.

It is found in the cytoplasm. Its subcellular location is the nucleoid. In terms of biological role, appears to contribute to D.radiodurans capacity to survive exposure to ionizing radiation. Likely functions as a DNA damage-induced nucleoid-associated protein (NAP) that contributes to the enhanced level of nucleoid compaction after irradiation by bridging DNA duplexes, thereby limiting the dispersion of the fragmented genome immediately after irradiation to facilitate subsequent DNA repair. In vitro, binds both ssDNA and dsDNA, and is able to compact circular DNA, circularize linear DNA, anneal complementary DNA strands and protect DNA from nucleases. The chain is DNA damage response protein C from Deinococcus radiodurans (strain ATCC 13939 / DSM 20539 / JCM 16871 / CCUG 27074 / LMG 4051 / NBRC 15346 / NCIMB 9279 / VKM B-1422 / R1).